The primary structure comprises 144 residues: MKKILVSFVAIMAVASSAMAAETMNMHDQVNNAQAPAHQMQSSAEKSAVQGDSMTMMDMSSHDQAAMSHDMMQNGNSAAHQDMAEMHKKMMKSKPAASNETAKSFSEMNEHEKSAVVHEKANNGQSSVIHQQQAEKHRSQITQN.

A signal peptide spans 1 to 20 (MKKILVSFVAIMAVASSAMA). The interval 86-144 (MHKKMMKSKPAASNETAKSFSEMNEHEKSAVVHEKANNGQSSVIHQQQAEKHRSQITQN) is disordered. Residues 96 to 107 (AASNETAKSFSE) show a composition bias toward polar residues. The span at 108 to 121 (MNEHEKSAVVHEKA) shows a compositional bias: basic and acidic residues. Residues 122–132 (NNGQSSVIHQQ) are compositionally biased toward polar residues.

This sequence to S.typhimurium SilE.

The protein localises to the periplasm. Functionally, required for the copper-inducible expression of copper resistance. Activated by the two-component regulatory system CusS/CusR. This is Probable copper-binding protein PcoE (pcoE) from Escherichia coli.